The primary structure comprises 220 residues: Octanoyltransferase (220 aa).

Residues 27–208 form the BPL/LPL catalytic domain; it reads PGTADEIWLC…QLARAHGQAV (182 aa). Residues 66–73, 139–141, and 152–154 each bind substrate; these read RGGQVTYH, ALG, and GLA. The Acyl-thioester intermediate role is filled by C170.

This sequence belongs to the LipB family.

Its subcellular location is the cytoplasm. The catalysed reaction is octanoyl-[ACP] + L-lysyl-[protein] = N(6)-octanoyl-L-lysyl-[protein] + holo-[ACP] + H(+). The protein operates within protein modification; protein lipoylation via endogenous pathway; protein N(6)-(lipoyl)lysine from octanoyl-[acyl-carrier-protein]: step 1/2. Catalyzes the transfer of endogenously produced octanoic acid from octanoyl-acyl-carrier-protein onto the lipoyl domains of lipoate-dependent enzymes. Lipoyl-ACP can also act as a substrate although octanoyl-ACP is likely to be the physiological substrate. The sequence is that of Octanoyltransferase from Bordetella pertussis (strain Tohama I / ATCC BAA-589 / NCTC 13251).